Consider the following 557-residue polypeptide: Protein Red (557 aa).

Residues 1–84 (MPERDSEPFS…RKKKSYYAKL (84 aa)) form a disordered region. The span at 16 to 25 (DGHDVDDPHS) shows a compositional bias: basic and acidic residues. A compositionally biased stretch (low complexity) spans 42-53 (TPRAAPTSAPPS). An N6-acetyllysine mark is found at Lys98 and Lys137. Lys151 participates in a covalent cross-link: Glycyl lysine isopeptide (Lys-Gly) (interchain with G-Cter in SUMO2). The disordered stretch occupies residues 181–205 (KEKEEEELMEKPQKETKKDEDPENK). Ser287 is subject to Phosphoserine. Positions 294–303 (RNKKLKKKDK) are enriched in basic residues. The segment at 294–402 (RNKKLKKKDK…PIDVDKGPGS (109 aa)) is disordered. Over residues 304-313 (GKLEEKKPPE) the composition is skewed to basic and acidic residues. Glycyl lysine isopeptide (Lys-Gly) (interchain with G-Cter in SUMO2) cross-links involve residues Lys310 and Lys331. The segment covering 332 to 398 (TPRDKERERY…VDDEPIDVDK (67 aa)) has biased composition (basic and acidic residues). Repeat copies occupy residues 342-343 (RE), 344-345 (RE), 346-347 (RD), 348-349 (RE), 350-351 (RD), 352-353 (RD), 354-355 (RD), 356-357 (RE), 358-359 (RE), 360-361 (RE), 362-363 (RD), 364-365 (RE), 366-367 (RE), 368-369 (RE), 370-371 (RD), 372-373 (RE), and 374-375 (RE). Residues 342 to 375 (RERERDRERDRDRDRERERERDRERERERDRERE) are 17 X 2 AA tandem repeats of R-[ED]. Residues Lys386, Lys388, Lys404, and Lys408 each participate in a glycyl lysine isopeptide (Lys-Gly) (interchain with G-Cter in SUMO2) cross-link. Ser417 and Ser460 each carry phosphoserine. Thr485 carries the phosphothreonine modification. Residues Lys496, Lys501, and Lys509 each participate in a glycyl lysine isopeptide (Lys-Gly) (interchain with G-Cter in SUMO2) cross-link. Ser536 bears the Phosphoserine mark. Residues Lys541, Lys543, Lys544, and Lys553 each participate in a glycyl lysine isopeptide (Lys-Gly) (interchain with G-Cter in SUMO2) cross-link.

This sequence belongs to the RED family. As to quaternary structure, component of the spliceosome B complex. Interacts with SMU1. Interacts with MAD1L1. May interact with DHX15.

The protein localises to the nucleus. Its subcellular location is the nucleoplasm. The protein resides in the chromosome. It localises to the cytoplasm. It is found in the cytoskeleton. The protein localises to the spindle pole. Its function is as follows. Involved in pre-mRNA splicing as a component of the spliceosome. Auxiliary spliceosomal protein that regulates selection of alternative splice sites in a small set of target pre-mRNA species. Required for normal mitotic cell cycle progression. Recruits MAD1L1 and MAD2L1 to kinetochores, and is required to trigger the spindle assembly checkpoint. Required for normal accumulation of SMU1. This is Protein Red (IK) from Pongo abelii (Sumatran orangutan).